The following is a 396-amino-acid chain: Putative peptide chain release factor 1, mitochondrial (396 aa).

Gln270 bears the N5-methylglutamine mark.

Belongs to the prokaryotic/mitochondrial release factor family. Methylation of glutamine in the GGQ triplet is conserved from bacteria to mammals.

The protein localises to the mitochondrion. This Schizosaccharomyces pombe (strain 972 / ATCC 24843) (Fission yeast) protein is Putative peptide chain release factor 1, mitochondrial.